The chain runs to 511 residues: Histidine ammonia-lyase (511 aa).

The segment at residues 142-144 is a cross-link (5-imidazolinone (Ala-Gly)); that stretch reads ASG. Serine 143 bears the 2,3-didehydroalanine (Ser) mark.

The protein belongs to the PAL/histidase family. Post-translationally, contains an active site 4-methylidene-imidazol-5-one (MIO), which is formed autocatalytically by cyclization and dehydration of residues Ala-Ser-Gly.

It is found in the cytoplasm. It catalyses the reaction L-histidine = trans-urocanate + NH4(+). It functions in the pathway amino-acid degradation; L-histidine degradation into L-glutamate; N-formimidoyl-L-glutamate from L-histidine: step 1/3. In Brucella canis (strain ATCC 23365 / NCTC 10854 / RM-666), this protein is Histidine ammonia-lyase.